The following is an 80-amino-acid chain: uncharacterized protein (80 aa).

This is an uncharacterized protein from Pseudoalteromonas phage PM2 (Bacteriophage PM2).